The sequence spans 236 residues: 3-oxoacyl-[acyl-carrier-protein] reductase (236 aa).

Methionine 1 is subject to N-acetylmethionine. Residues serine 11–isoleucine 14 and arginine 34–asparagine 35 each bind NADP(+). The residue at position 40 (lysine 40) is an N6-acetyllysine. Residues aspartate 56 and alanine 83–glycine 85 each bind NADP(+). The residue at position 96 (lysine 96) is an N6-acetyllysine. Residue serine 134 participates in substrate binding. Residues tyrosine 147, lysine 151, and isoleucine 180–threonine 182 each bind NADP(+). The active-site Proton acceptor is tyrosine 147. Lysine 194 carries the post-translational modification N6-acetyllysine.

It belongs to the short-chain dehydrogenases/reductases (SDR) family. As to quaternary structure, homotetramer (in vitro). Heterotetramer with HSD17B8; contains two molecules each of HSD17B8 and CBR4. Does not form homotetramers when HSD17B8 is coexpressed, only heterotetramers (in vitro).

The protein resides in the mitochondrion matrix. The enzyme catalyses a (3R)-hydroxyacyl-[ACP] + NADP(+) = a 3-oxoacyl-[ACP] + NADPH + H(+). The catalysed reaction is a quinone + NADPH + H(+) = a quinol + NADP(+). It functions in the pathway lipid metabolism; fatty acid biosynthesis. Its function is as follows. Component of the heterotetramer complex KAR (3-ketoacyl-[acyl carrier protein] reductase or 3-ketoacyl-[ACP] reductase) that forms part of the mitochondrial fatty acid synthase (mtFAS). Beta-subunit of the KAR heterotetramer complex, responsible for the 3-ketoacyl-ACP reductase activity of the mtFAS, reduces 3-oxoacyl-[ACP] to (3R)-hydroxyacyl-[ACP] in a NADPH-dependent manner with no chain length preference, thereby participating in mitochondrial fatty acid biosynthesis. The homotetramer has NADPH-dependent quinone reductase activity (in vitro), hence could play a role in protection against cytotoxicity of exogenous quinones. As a heterotetramer, it can also reduce 9,10-phenanthrenequinone, 1,4-benzoquinone and various other o-quinones and p-quinones (in vitro). The polypeptide is 3-oxoacyl-[acyl-carrier-protein] reductase (Cbr4) (Mus musculus (Mouse)).